We begin with the raw amino-acid sequence, 199 residues long: MPQPLILASTSEIRAKMLSNAGVPHTTSGARIDEEMVKEALLAEQASPRDIADTLAEMKARKISDKTPGAIVLGCDQVLDHRGVLLSKPVDSHDALTQLQALRNDRHTLLSAAVICEDGKPVWRHVGVVRLRMHDVSDAYLQDYVARNWDSIRHAVGAYKLEEEGVRLFSRIDGDYFTVLGLPLLELLSYLALRGDLPR.

Residue Asp-76 is the Proton acceptor of the active site.

Belongs to the Maf family. A divalent metal cation serves as cofactor.

The protein resides in the cytoplasm. The enzyme catalyses a ribonucleoside 5'-triphosphate + H2O = a ribonucleoside 5'-phosphate + diphosphate + H(+). It carries out the reaction a 2'-deoxyribonucleoside 5'-triphosphate + H2O = a 2'-deoxyribonucleoside 5'-phosphate + diphosphate + H(+). Nucleoside triphosphate pyrophosphatase. May have a dual role in cell division arrest and in preventing the incorporation of modified nucleotides into cellular nucleic acids. The protein is Nucleoside triphosphate pyrophosphatase of Roseobacter denitrificans (strain ATCC 33942 / OCh 114) (Erythrobacter sp. (strain OCh 114)).